A 282-amino-acid polypeptide reads, in one-letter code: Undecaprenyl-diphosphatase (282 aa).

7 helical membrane-spanning segments follow: residues 1-21 (MTLF…FLPV), 40-60 (GAAF…IYFY), 85-105 (AAMG…GLLF), 117-137 (YWVS…EWSV), 196-216 (FSFL…LYHT), 229-249 (AITA…AFLI), and 258-278 (SIFI…IAAG).

This sequence belongs to the UppP family.

It is found in the cell inner membrane. It carries out the reaction di-trans,octa-cis-undecaprenyl diphosphate + H2O = di-trans,octa-cis-undecaprenyl phosphate + phosphate + H(+). Its function is as follows. Catalyzes the dephosphorylation of undecaprenyl diphosphate (UPP). Confers resistance to bacitracin. The protein is Undecaprenyl-diphosphatase of Chlorobium phaeobacteroides (strain DSM 266 / SMG 266 / 2430).